The following is a 436-amino-acid chain: Elongation factor 1-gamma-A (436 aa).

The 86-residue stretch at 2–87 (AGGTLYTYPD…YVGNDELRGT (86 aa)) folds into the GST N-terminal domain. Residues 88-221 (TRLHQAQVIQ…KMAQFDAKKF (134 aa)) enclose the GST C-terminal domain. 2 stretches are compositionally biased toward basic and acidic residues: residues 221-249 (FAEM…EKKK) and 265-278 (SEKA…SKDP). The segment at 221-278 (FAEMQPKKETPKKEKPAKEPKKEKEEKKKAAPTPAPAPEDDLDESEKALAAEPKSKDP) is disordered. The EF-1-gamma C-terminal domain occupies 275 to 436 (SKDPYAHLPK…KPFNQGKIFK (162 aa)).

EF-1 is composed of four subunits: alpha, beta, delta, and gamma. Phosphorylated by CDK1. Post-translationally, the N-terminus is blocked.

Probably plays a role in anchoring the complex to other cellular components. The sequence is that of Elongation factor 1-gamma-A (eef1g-a) from Xenopus laevis (African clawed frog).